The chain runs to 302 residues: G-protein coupled receptor A5 (302 aa).

Over 1–20 the chain is Extracellular; the sequence is MADSSNSSLNCTAIHDQTVL. Residues 21–41 form a helical membrane-spanning segment; that stretch reads ILGQVFNSVWLFISVIFLYIF. At 42 to 50 the chain is on the cytoplasmic side; sequence ACKLCFRPR. The helical transmembrane segment at 51–71 threads the bilayer; sequence IYLWLSFYTLGFMLWVLCKVL. The Extracellular segment spans residues 72-81; it reads QEYVTGKFKC. A helical membrane pass occupies residues 82–102; that stretch reads VITNCIGDFCLVFLSCIMLGI. Residues 103 to 122 are Cytoplasmic-facing; sequence MLDRYLKIQGTLRGGMKDIH. The helical transmembrane segment at 123-143 threads the bilayer; the sequence is IGIFVSASCFGSLMIALLDGL. The Extracellular segment spans residues 144–173; sequence HMGDSEKLQFNGTESFKCLPATSVSSYKAQ. Residues 174-194 form a helical membrane-spanning segment; sequence LMFKSIFCIICIIMCLILTCL. Topologically, residues 195–208 are cytoplasmic; the sequence is TAKKVLGTRLRKKY. Residues 209 to 229 form a helical membrane-spanning segment; it reads VIVGNVGLLSFVNILLWVMIA. Over 230–249 the chain is Extracellular; sequence CGLLKQALESNLSLCPTKQS. Residues 250–270 traverse the membrane as a helical segment; the sequence is TYIYPYTMPVTVIFVLVIYLF. Topologically, residues 271–302 are cytoplasmic; it reads SSTHMKNAMRKSGQIRHSLSSPNQVQSSFRLV.

The protein belongs to the G-protein coupled receptor 1 family.

It localises to the host cell membrane. The protein localises to the host endoplasmic reticulum membrane. Acts as a viral G-protein coupled receptor that constitutively activates host alphai-type G-proteins, thereby inhibiting host forskolin-triggered CREB activation. The chain is G-protein coupled receptor A5 (A5) from Connochaetes taurinus (Blue wildebeest).